We begin with the raw amino-acid sequence, 165 residues long: PTS system glucose-specific EIIA component (165 aa).

The PTS EIIA type-1 domain maps to 34–138 (DPVFAQKMMG…SSITPIIISN (105 aa)). Zn(2+) is bound by residues His71 and His86. His86 (tele-phosphohistidine intermediate; for EIIA activity) is an active-site residue. A Phosphohistidine; by HPr modification is found at His86.

Heterodimer with glycerol kinase (glpk). The cofactor is Zn(2+).

The protein resides in the cytoplasm. Its function is as follows. The phosphoenolpyruvate-dependent sugar phosphotransferase system (sugar PTS), a major carbohydrate active transport system, catalyzes the phosphorylation of incoming sugar substrates concomitantly with their translocation across the cell membrane. The enzyme II complex composed of PtsG and Crr is involved in glucose transport. This Oceanobacillus iheyensis (strain DSM 14371 / CIP 107618 / JCM 11309 / KCTC 3954 / HTE831) protein is PTS system glucose-specific EIIA component (crr).